Reading from the N-terminus, the 623-residue chain is Interferon-induced GTP-binding protein Mx3 (623 aa).

Residues 31 to 304 (DLALPAIAVI…LVHHIEKSLP (274 aa)) form the Dynamin-type G domain. Residues 41-48 (GDQSSGKS) are G1 motif. 41–48 (GDQSSGKS) contacts GTP. The interval 66-68 (VTR) is G2 motif. A G3 motif region spans residues 142 to 145 (DLPG). GTP-binding positions include 142 to 146 (DLPGI) and 211 to 214 (TKPD). Residues 211-214 (TKPD) are G4 motif. Residues 243–246 (KCRG) are G5 motif. The 87-residue stretch at 537–623 (LQEMMLHLKS…MKARSYLVEF (87 aa)) folds into the GED domain.

This sequence belongs to the TRAFAC class dynamin-like GTPase superfamily. Dynamin/Fzo/YdjA family.

It is found in the cytoplasm. Does not inhibit strain RB-1 of the fish pathogen, infectious hematopoietic necrosis virus (IHNV). This is Interferon-induced GTP-binding protein Mx3 from Oncorhynchus mykiss (Rainbow trout).